The primary structure comprises 336 residues: MAKVYYEKDVTVNVLKEKKVAIIGYGSQGHAHAQNLRDNGFDVVVGLRKGKSWDKAKEDGFSVYTVAEAAKQADVVMILLPDELQPEVYEAEIAPNLQAGNSLVFAHGFNVHFDQVKPPANVDVFLVAPKGPGHLVRRTFSEGGAVPALFAVYQDATGVATEKALSYADGIGATRAGVLETTFKEETETDLFGEQAVLCGGVTALVKAGFETLVDAGYQPELAYFECLHELKLIVDLMYEGGLENMRYSVSDTAQWGDFVSGPRVVTEDTKKAMGAVLAEIQDGTFARGWIAEHKAGRPNFHATNEKENEHEIEVVGRKLREMMPFVQPRVKAGVK.

Residues Ala2–Thr181 form the KARI N-terminal Rossmann domain. NADP(+)-binding positions include Tyr25–Gln28, Arg48, Ser52, and Asp82–Gln85. His107 is a catalytic residue. Gly133 is a binding site for NADP(+). The KARI C-terminal knotted domain maps to Thr182–Val327. 4 residues coordinate Mg(2+): Asp190, Glu194, Glu226, and Glu230. Residue Ser251 participates in substrate binding.

It belongs to the ketol-acid reductoisomerase family. Mg(2+) is required as a cofactor.

It carries out the reaction (2R)-2,3-dihydroxy-3-methylbutanoate + NADP(+) = (2S)-2-acetolactate + NADPH + H(+). The catalysed reaction is (2R,3R)-2,3-dihydroxy-3-methylpentanoate + NADP(+) = (S)-2-ethyl-2-hydroxy-3-oxobutanoate + NADPH + H(+). Its pathway is amino-acid biosynthesis; L-isoleucine biosynthesis; L-isoleucine from 2-oxobutanoate: step 2/4. It participates in amino-acid biosynthesis; L-valine biosynthesis; L-valine from pyruvate: step 2/4. Involved in the biosynthesis of branched-chain amino acids (BCAA). Catalyzes an alkyl-migration followed by a ketol-acid reduction of (S)-2-acetolactate (S2AL) to yield (R)-2,3-dihydroxy-isovalerate. In the isomerase reaction, S2AL is rearranged via a Mg-dependent methyl migration to produce 3-hydroxy-3-methyl-2-ketobutyrate (HMKB). In the reductase reaction, this 2-ketoacid undergoes a metal-dependent reduction by NADPH to yield (R)-2,3-dihydroxy-isovalerate. The protein is Ketol-acid reductoisomerase (NADP(+)) 1 of Bacillus cereus (strain ZK / E33L).